Reading from the N-terminus, the 518-residue chain is Wax ester synthase/diacylglycerol acyltransferase 6 (518 aa).

Basic and acidic residues predominate over residues M1–D17. Positions M1–S29 are disordered. The Cytoplasmic segment spans residues M1 to R213. Catalysis depends on H163, which acts as the Proton acceptor. The tract at residues P185 to M205 is disordered. The chain crosses the membrane as a helical span at residues F214–D234. The Lumenal portion of the chain corresponds to A235–D518. Residue N430 is glycosylated (N-linked (GlcNAc...) asparagine).

The protein in the N-terminal section; belongs to the long-chain O-acyltransferase family. As to expression, expressed in roots, stems, leaves, flowers and siliques.

It is found in the cell membrane. The protein localises to the endoplasmic reticulum membrane. It localises to the golgi apparatus membrane. It carries out the reaction an acyl-CoA + a 1,2-diacyl-sn-glycerol = a triacyl-sn-glycerol + CoA. It catalyses the reaction a long chain fatty alcohol + a fatty acyl-CoA = a wax ester + CoA. It participates in glycerolipid metabolism; triacylglycerol biosynthesis. Its pathway is lipid metabolism. In terms of biological role, bifunctional wax ester synthase/diacylglycerol acyltransferase that uses acyl-CoAs with 16, 18 and 20 carbons as substrates, preferably in combination with 16:0ol alcohol. Involved in cuticular wax biosynthesis. The chain is Wax ester synthase/diacylglycerol acyltransferase 6 from Arabidopsis thaliana (Mouse-ear cress).